The following is a 575-amino-acid chain: Epsin-1 (575 aa).

Arg-8, Lys-11, Arg-25, Asn-30, Arg-63, and His-73 together coordinate a 1,2-diacyl-sn-glycero-3-phospho-(1D-myo-inositol-4,5-bisphosphate). Positions 12 to 144 constitute an ENTH domain; the sequence is NIVHNYSEAE…RDEDRLREER (133 aa). A disordered region spans residues 149-186; it reads KTKEKLAQTATASSAAVGSGPPPEAEQAWPQSSGEEEL. Positions 157 to 167 are enriched in low complexity; sequence TATASSAAVGS. UIM domains follow at residues 183–202, 208–227, and 233–252; these read EEEL…ADQP, EDDV…HDKE, and GDDL…TGGK. Disordered regions lie at residues 264–283 and 293–575; these read FTTP…ASVP and SDPW…PFLL. 8 repeat units span residues 274–276, 294–296, 306–308, 319–321, 332–334, 349–351, 367–369, and 377–379. An 8 X 3 AA repeats of D-P-W region spans residues 274 to 379; sequence DPWGGPASVP…APAPAFSDPW (106 aa). The span at 306 to 316 shows a compositional bias: low complexity; the sequence is DPWGGAAPTPA. A compositionally biased stretch (low complexity) spans 333 to 346; the sequence is PWGGTPAPAAGEGP. Over residues 367 to 379 the composition is skewed to low complexity; that stretch reads DPWAPAPAFSDPW. Ser-382 carries the phosphoserine modification. A [DE]-X(1,2)-F-X-X-[FL]-X-X-X-R motif motif is present at residues 401-410; that stretch reads DEFSDFDRLR. Phosphoserine occurs at positions 418 and 419. At Thr-420 the chain carries Phosphothreonine. Phosphoserine is present on residues Ser-434, Ser-446, and Ser-453. Residues 453-467 are compositionally biased toward pro residues; sequence SPPPAATPTPTPPTR. Residues Thr-459, Thr-463, and Thr-469 each carry the phosphothreonine modification. Residue Ser-472 is modified to Phosphoserine. Thr-493 is subject to Phosphothreonine. Repeat copies occupy residues 501 to 503 and 517 to 519. Residues 501-573 form a 3 X 3 AA repeats of N-P-F region; sequence NPFLPSGAPA…GPPAPNTNPF (73 aa). Arg-533 carries the post-translational modification Omega-N-methylarginine. The span at 556 to 569 shows a compositional bias: pro residues; it reads GLPPMMPPGPPAPN. Copy 3 of the repeat occupies 571–573; that stretch reads NPF.

The protein belongs to the epsin family. In terms of assembly, monomer. Binds ITSN1. Binds clathrin, ZBTB16/ZNF145, AP2A1 and AP2A2. Binds ubiquitinated proteins. Interacts with RALBP1 in a complex also containing NUMB and TFAP2A during interphase and mitosis. Interacts with AP2B1. Interacts with UBQLN2. Interacts with REPS2; the interaction is direct. Interacts with EPS15; the interaction is direct. Interacts with ENTREP1. In terms of processing, ubiquitinated. Post-translationally, phosphorylated on serine and/or threonine residues in mitotic cells. Phosphorylation reduces interaction with REPS2, AP-2 and the membrane fraction. Depolarization of synaptosomes results in dephosphorylation. Ubiquitously expressed. Detected in liver, spleen and testis, and weakly in lung and thymus (at protein level).

The protein resides in the cytoplasm. The protein localises to the cell membrane. It is found in the nucleus. It localises to the membrane. Its subcellular location is the clathrin-coated pit. Binds to membranes enriched in phosphatidylinositol 4,5-bisphosphate (PtdIns(4,5)P2). Modifies membrane curvature and facilitates the formation of clathrin-coated invaginations. Regulates receptor-mediated endocytosis. This chain is Epsin-1 (Epn1), found in Rattus norvegicus (Rat).